Here is a 204-residue protein sequence, read N- to C-terminus: Ribonuclease HII (204 aa).

An RNase H type-2 domain is found at 8–197; sequence RLICGVDEAG…VRELLQNPPL (190 aa). Residues D14, E15, and D106 each contribute to the a divalent metal cation site.

It belongs to the RNase HII family. The cofactor is Mn(2+). It depends on Mg(2+) as a cofactor.

The protein localises to the cytoplasm. It catalyses the reaction Endonucleolytic cleavage to 5'-phosphomonoester.. Its function is as follows. Endonuclease that specifically degrades the RNA of RNA-DNA hybrids. The chain is Ribonuclease HII from Azoarcus sp. (strain BH72).